The following is an 89-amino-acid chain: DNA/RNA-binding protein Alba (89 aa).

K11 carries the N6-acetyllysine modification.

It belongs to the histone-like Alba family. Post-translationally, acetylated. Acetylation at Lys-11 decreases DNA-binding affinity.

It is found in the cytoplasm. The protein resides in the chromosome. Functionally, binds double-stranded DNA tightly but without sequence specificity. Involved in DNA compaction. In Thermoplasma volcanium (strain ATCC 51530 / DSM 4299 / JCM 9571 / NBRC 15438 / GSS1), this protein is DNA/RNA-binding protein Alba.